The sequence spans 319 residues: uncharacterized protein (319 aa).

Residues 1-23 form the signal peptide; sequence MFPFRRNVLAFAALLALSSPVLA.

This sequence to H.influenzae HI_0755.

This is an uncharacterized protein from Escherichia coli (strain K12).